Consider the following 537-residue polypeptide: Cytochrome P450 86A8 (537 aa).

A helical transmembrane segment spans residues 3–23 (ISTALMILSAITAYFLWLTFI). Residue C458 coordinates heme.

This sequence belongs to the cytochrome P450 family. Requires heme as cofactor. Expressed in leaves, stems, flowers and siliques. Expressed at low levels in roots.

It is found in the membrane. The catalysed reaction is an organic molecule + reduced [NADPH--hemoprotein reductase] + O2 = an alcohol + oxidized [NADPH--hemoprotein reductase] + H2O + H(+). Catalyzes the omega-hydroxylation of various fatty acids (FA). Acts on saturated and unsaturated fatty acids with chain lengths from C12 to C18. May be involved in the biosynthesis of cutin in the epidermis which prevents post-genital organ fusions. Hydroxylated FAs may be important for trichome differentiation, establishment of apical dominance and senescence. The chain is Cytochrome P450 86A8 (CYP86A8) from Arabidopsis thaliana (Mouse-ear cress).